The following is a 261-amino-acid chain: 22 kDa alpha-zein 8b (261 aa).

The first 16 residues, 1–16 (LALLALLALFVSATNA), serve as a signal peptide directing secretion.

The protein belongs to the zein family.

Zeins are major seed storage proteins. This is 22 kDa alpha-zein 8b from Zea mays (Maize).